The sequence spans 307 residues: D-alanine--D-alanine ligase (307 aa).

The ATP-grasp domain occupies 101–301 (KTVMRAAGVS…FGELVRWMVE (201 aa)). 127 to 182 (PLTPPYVVKPIAEGSSMGVIIVREERSHPPQILASDEWVYGEEVLAETYIAGRELT) is an ATP binding site. Mg(2+)-binding residues include aspartate 251, glutamate 268, and asparagine 270.

The protein belongs to the D-alanine--D-alanine ligase family. The cofactor is Mg(2+). Mn(2+) is required as a cofactor.

Its subcellular location is the cytoplasm. The catalysed reaction is 2 D-alanine + ATP = D-alanyl-D-alanine + ADP + phosphate + H(+). Its pathway is cell wall biogenesis; peptidoglycan biosynthesis. In terms of biological role, cell wall formation. This Methylorubrum populi (strain ATCC BAA-705 / NCIMB 13946 / BJ001) (Methylobacterium populi) protein is D-alanine--D-alanine ligase.